The chain runs to 345 residues: Phosphate acyltransferase (345 aa).

This sequence belongs to the PlsX family. In terms of assembly, homodimer. Probably interacts with PlsY.

The protein localises to the cytoplasm. It catalyses the reaction a fatty acyl-[ACP] + phosphate = an acyl phosphate + holo-[ACP]. It functions in the pathway lipid metabolism; phospholipid metabolism. Its function is as follows. Catalyzes the reversible formation of acyl-phosphate (acyl-PO(4)) from acyl-[acyl-carrier-protein] (acyl-ACP). This enzyme utilizes acyl-ACP as fatty acyl donor, but not acyl-CoA. The chain is Phosphate acyltransferase from Nitratidesulfovibrio vulgaris (strain ATCC 29579 / DSM 644 / CCUG 34227 / NCIMB 8303 / VKM B-1760 / Hildenborough) (Desulfovibrio vulgaris).